Reading from the N-terminus, the 161-residue chain is Large ribosomal subunit protein uL10 (161 aa).

The protein belongs to the universal ribosomal protein uL10 family. As to quaternary structure, part of the ribosomal stalk of the 50S ribosomal subunit. The N-terminus interacts with L11 and the large rRNA to form the base of the stalk. The C-terminus forms an elongated spine to which L12 dimers bind in a sequential fashion forming a multimeric L10(L12)X complex.

Its function is as follows. Forms part of the ribosomal stalk, playing a central role in the interaction of the ribosome with GTP-bound translation factors. In Malacoplasma penetrans (strain HF-2) (Mycoplasma penetrans), this protein is Large ribosomal subunit protein uL10.